The following is a 69-amino-acid chain: Large ribosomal subunit protein bL31 (69 aa).

This sequence belongs to the bacterial ribosomal protein bL31 family. Type A subfamily. As to quaternary structure, part of the 50S ribosomal subunit.

Its function is as follows. Binds the 23S rRNA. The polypeptide is Large ribosomal subunit protein bL31 (Magnetococcus marinus (strain ATCC BAA-1437 / JCM 17883 / MC-1)).